We begin with the raw amino-acid sequence, 536 residues long: Lysosomal acid glucosylceramidase (536 aa).

Positions 1–39 (MELSSPSREECPRPQGRVGIMAASLMGLLLLQAASWASG) are cleaved as a signal peptide. Intrachain disulfides connect Cys43–Cys55 and Cys57–Cys62. Residues Asn58, Asn98, and Asn185 are each glycosylated (N-linked (GlcNAc...) asparagine). Residue Glu274 is the Proton donor of the active site. An N-linked (GlcNAc...) asparagine glycan is attached at Asn309. Glu379 functions as the Nucleophile in the catalytic mechanism. Asn501 is a glycosylation site (N-linked (GlcNAc...) asparagine).

Belongs to the glycosyl hydrolase 30 family. Interacts with saposin-C. Interacts with SCARB2. Interacts with TCP1. Interacts with GRN; this interaction prevents aggregation of GBA1-SCARB2 complex via interaction with HSPA1A upon stress.

It localises to the lysosome membrane. The catalysed reaction is a beta-D-glucosyl-(1&lt;-&gt;1')-N-acylsphing-4-enine + H2O = an N-acylsphing-4-enine + D-glucose. The enzyme catalyses a beta-D-galactosyl-(1&lt;-&gt;1')-N-acylsphing-4-enine + H2O = an N-acylsphing-4-enine + D-galactose. It catalyses the reaction cholesteryl 3-beta-D-glucoside + H2O = cholesterol + D-glucose. It carries out the reaction a beta-D-glucosyl-(1&lt;-&gt;1')-N-acylsphing-4-enine + cholesterol = cholesteryl 3-beta-D-glucoside + an N-acylsphing-4-enine. The catalysed reaction is beta-D-glucosyl-N-(9Z-octadecenoyl)-sphing-4E-enine + cholesterol = N-(9Z-octadecenoyl)-sphing-4-enine + cholesteryl 3-beta-D-glucoside. The enzyme catalyses beta-D-glucosyl-N-octanoylsphing-4E-enine + cholesterol = N-octanoylsphing-4-enine + cholesteryl 3-beta-D-glucoside. It catalyses the reaction beta-D-glucosyl-N-dodecanoylsphing-4-enine + cholesterol = N-dodecanoylsphing-4-enine + cholesteryl 3-beta-D-glucoside. It carries out the reaction beta-D-glucosyl-(1&lt;-&gt;1)-N-octadecanoylsphing-4-enine + cholesterol = N-octadecanoylsphing-4-enine + cholesteryl 3-beta-D-glucoside. The catalysed reaction is beta-D-glucosyl-(1&lt;-&gt;1')-N-(15Z-tetracosenoyl)-sphing-4-enine + cholesterol = N-(15Z-tetracosenoyl)-sphing-4-enine + cholesteryl 3-beta-D-glucoside. The enzyme catalyses a beta-D-galactosyl-(1&lt;-&gt;1')-N-acylsphing-4-enine + cholesterol = cholesteryl 3-beta-D-galactoside + an N-acylsphing-4-enine. It catalyses the reaction 1-(beta-D-galactosyl)-N-dodecanoylsphing-4-enine + cholesterol = cholesteryl 3-beta-D-galactoside + N-dodecanoylsphing-4-enine. It carries out the reaction a beta-D-xylosyl-(1&lt;-&gt;1')-N-acylsphing-4-enine + cholesterol = cholesteryl 3-beta-D-xyloside + an N-acylsphing-4-enine. The catalysed reaction is beta-D-xylosyl-(1&lt;-&gt;1')-N-(9Z-octadecenoyl)-sphing-4-enine + cholesterol = cholesteryl 3-beta-D-xyloside + N-(9Z-octadecenoyl)-sphing-4-enine. Its pathway is steroid metabolism; cholesterol metabolism. It functions in the pathway sphingolipid metabolism. In terms of biological role, glucosylceramidase that catalyzes, within the lysosomal compartment, the hydrolysis of glucosylceramides/GlcCers (such as beta-D-glucosyl-(1&lt;-&gt;1')-N-acylsphing-4-enine) into free ceramides (such as N-acylsphing-4-enine) and glucose. Plays a central role in the degradation of complex lipids and the turnover of cellular membranes. Through the production of ceramides, participates in the PKC-activated salvage pathway of ceramide formation. Catalyzes the glucosylation of cholesterol, through a transglucosylation reaction where glucose is transferred from GlcCer to cholesterol. GlcCer containing mono-unsaturated fatty acids (such as beta-D-glucosyl-N-(9Z-octadecenoyl)-sphing-4-enine) are preferred as glucose donors for cholesterol glucosylation when compared with GlcCer containing same chain length of saturated fatty acids (such as beta-D-glucosyl-N-octadecanoyl-sphing-4-enine). Under specific conditions, may alternatively catalyze the reverse reaction, transferring glucose from cholesteryl 3-beta-D-glucoside to ceramide. Can also hydrolyze cholesteryl 3-beta-D-glucoside producing glucose and cholesterol. Catalyzes the hydrolysis of galactosylceramides/GalCers (such as beta-D-galactosyl-(1&lt;-&gt;1')-N-acylsphing-4-enine), as well as the transfer of galactose between GalCers and cholesterol in vitro, but with lower activity than with GlcCers. Contrary to GlcCer and GalCer, xylosylceramide/XylCer (such as beta-D-xyosyl-(1&lt;-&gt;1')-N-acylsphing-4-enine) is not a good substrate for hydrolysis, however it is a good xylose donor for transxylosylation activity to form cholesteryl 3-beta-D-xyloside. This chain is Lysosomal acid glucosylceramidase (GBA1), found in Sus scrofa (Pig).